Here is a 152-residue protein sequence, read N- to C-terminus: UPF0336 protein Tfu_2666 (152 aa).

Positions tyrosine 7–alanine 116 constitute a MaoC-like domain.

This sequence belongs to the UPF0336 family.

This Thermobifida fusca (strain YX) protein is UPF0336 protein Tfu_2666.